The sequence spans 94 residues: Pyrimidine/purine nucleoside phosphorylase (94 aa).

This sequence belongs to the nucleoside phosphorylase PpnP family.

The catalysed reaction is a purine D-ribonucleoside + phosphate = a purine nucleobase + alpha-D-ribose 1-phosphate. It carries out the reaction adenosine + phosphate = alpha-D-ribose 1-phosphate + adenine. The enzyme catalyses cytidine + phosphate = cytosine + alpha-D-ribose 1-phosphate. It catalyses the reaction guanosine + phosphate = alpha-D-ribose 1-phosphate + guanine. The catalysed reaction is inosine + phosphate = alpha-D-ribose 1-phosphate + hypoxanthine. It carries out the reaction thymidine + phosphate = 2-deoxy-alpha-D-ribose 1-phosphate + thymine. The enzyme catalyses uridine + phosphate = alpha-D-ribose 1-phosphate + uracil. It catalyses the reaction xanthosine + phosphate = alpha-D-ribose 1-phosphate + xanthine. Functionally, catalyzes the phosphorolysis of diverse nucleosides, yielding D-ribose 1-phosphate and the respective free bases. Can use uridine, adenosine, guanosine, cytidine, thymidine, inosine and xanthosine as substrates. Also catalyzes the reverse reactions. This is Pyrimidine/purine nucleoside phosphorylase from Pseudomonas fluorescens (strain Pf0-1).